Consider the following 397-residue polypeptide: LIM/homeobox protein Lhx9 (397 aa).

Residues 40-60 are disordered; the sequence is RSKTESRLAKGGQMNGRETNM. LIM zinc-binding domains are found at residues 69–130 and 131–193; these read ALCA…RFSV and QRCA…LLQG. A DNA-binding region (homeobox) is located at residues 267–326; that stretch reads TKRMATSFKHHQLRTMKSYFAINHNPDAKDLKQLAQKTGLTKRVLQVWFQNARAKFRRNL. Disordered regions lie at residues 330-363 and 378-397; these read ENGG…TTLT and SNLD…TNLF. Positions 353 to 363 are enriched in low complexity; it reads LTPPGTATTLT. The segment covering 387-397 has biased composition (polar residues); it reads SPSQTTLTNLF.

It is found in the nucleus. Functionally, may be involved in gonadal development. The chain is LIM/homeobox protein Lhx9 (LHX9) from Gallus gallus (Chicken).